We begin with the raw amino-acid sequence, 507 residues long: MGEFQRNENKHKSWQQFFLYPLFFREDLYAIAHDHHLDRSGSSEPTEILVSNFLSFLTVKRSIRRMRKQTNSISLFGNSDPNKLIECNKNFYSKSILEGFTIVLEVSFAMRSKHFIEGMNGWNSLRSIHCLFPLMEDKLPHSNYISDIRVPYSIHPEILVRIFRRWIRDAPSLHLLRSILHEWKNSFSRENLQKALITQIENTRFSLFLWNSYVYECESFLIPLIKRFFNSQSLLYGSFPDRTHFDKKIKDIVLFPRKISTKKIWLLKDSFIHYVRYGERSLMALKGTHLQVKKCRYHLFHFWQYYFHLWFQPYRICSLQLSKTSFSFLGYFLHVKMKPLVVRVKMLDDLFITDLITNELNPIAPIRAILFFLAKEKFCDISGWPISKLSWTSLSDDDILDRFDRIWINLFHYYSGSINQEGLYHIKYILLLSCAKTLACKHKSTIRVVREQLGSELFTKSFSKEKFISSSFSKTRSQRERIWNSEISQINPLANFWQKMQNKQIEN.

It belongs to the intron maturase 2 family. MatK subfamily.

The protein resides in the plastid. Its subcellular location is the chloroplast. In terms of biological role, usually encoded in the trnK tRNA gene intron. Probably assists in splicing its own and other chloroplast group II introns. The protein is Maturase K of Cryptomeria japonica (Japanese cedar).